A 340-amino-acid polypeptide reads, in one-letter code: Short-chain dehydrogenase/reductase prx1 (340 aa).

5 residues coordinate NADP(+): isoleucine 60, lysine 84, aspartate 104, asparagine 131, and lysine 162. Residue serine 184 is the Proton donor of the active site. NADP(+) is bound by residues tyrosine 210 and lysine 214. The active-site Proton acceptor is the tyrosine 210. Lysine 214 serves as the catalytic Lowers pKa of active site Tyr.

This sequence belongs to the short-chain dehydrogenases/reductases (SDR) family.

It functions in the pathway sesquiterpene biosynthesis. In terms of biological role, short-chain dehydrogenase/reductase; part of the gene cluster that mediates the biosynthesis of PR-toxin, a bicyclic sesquiterpene belonging to the eremophilane class and acting as a mycotoxin. The first step of the pathway is catalyzed by the aristolochene synthase which performs the cyclization of trans,trans-farnesyl diphosphate (FPP) to the bicyclic sesquiterpene aristolochene. Following the formation of aristolochene, the non-oxygenated aristolochene is converted to the trioxygenated intermediate eremofortin B, via 7-epi-neopetasone. This conversion appears to involve three enzymes, a hydroxysterol oxidase-like enzyme, the quinone-oxidase prx3 that forms the quinone-type-structure in the bicyclic nucleus of aristolochene with the C8-oxo group and the C-3 hydroxyl group, and the P450 monooxygenase prx9 that introduces the epoxide at the double bond between carbons 1 and 2. No monoxy or dioxy-intermediates have been reported to be released to the broth, so these three early oxidative reactions may be coupled together. Eremofortin B is further oxidized by another P450 monooxygenase, that introduces a second epoxide between carbons 7 and 11 prior to acetylation to eremofortin A by the acetyltransferase prx11. The second epoxidation may be performed by a second P450 monooxygenase. After the acetylation step, eremofortin A is converted to eremofortin C and then to PR-toxin. First the conversion of eremofortin A to eremofortin C proceeds by oxidation of the side chain of the molecule at C-12 and is catalyzed by the short-chain oxidoreductase prx1. The cytochrome P450 monooxygenase prx8 also plays a role in this step. The primary alcohol formed at C-12 is finally oxidized by the short-chain alcohol dehydrogenase prx4 that forms PR-toxin. This is Short-chain dehydrogenase/reductase prx1 from Penicillium rubens (strain ATCC 28089 / DSM 1075 / NRRL 1951 / Wisconsin 54-1255) (Penicillium chrysogenum).